A 271-amino-acid polypeptide reads, in one-letter code: Cytochrome b termination protein 1 (271 aa).

Its subcellular location is the mitochondrion. Involved in 5'-end processing of mitochondrial COB, 15S rRNA, and RPM1 transcript. May also have a role in 3'-end processing of the COB pre-mRNA. This Saccharomyces cerevisiae (strain ATCC 204508 / S288c) (Baker's yeast) protein is Cytochrome b termination protein 1 (CBT1).